The sequence spans 294 residues: Endonuclease 3 (294 aa).

An N-terminal signal peptide occupies residues 1 to 24 (MGWSLRMWIVSILVLTQLVNGALC). A divalent metal cation is bound by residues tryptophan 25 and histidine 30. 25 to 30 (WGDAGH) is a binding site for substrate. Cysteine 34 and cysteine 65 are joined by a disulfide. Aspartate 69 and histidine 84 together coordinate a divalent metal cation. Substrate is bound by residues 69–75 (DEIKKLP), 84–87 (HFAD), and 94–99 (NYEYSR). 3 disulfides stabilise this stretch: cysteine 93-cysteine 241, cysteine 101-cysteine 106, and cysteine 221-cysteine 228. Asparagine 113 and tyrosine 131 together coordinate substrate. An N-linked (GlcNAc...) asparagine glycan is attached at asparagine 113. An N-linked (GlcNAc...) asparagine glycan is attached at asparagine 132. Residues histidine 142, aspartate 146, histidine 152, histidine 176, and aspartate 180 each coordinate a divalent metal cation. The segment at 142–191 (HYMGDIHQPLHEGFIGDLGGNKIKVHWYNQETNLHRVWDDMIIESALETY) is substrate binding. N-linked (GlcNAc...) asparagine glycans are attached at residues asparagine 193, asparagine 224, and asparagine 247. Positions 279–294 (GTLNRIFSAKRKLARA) are cleaved as a propeptide — removed in mature form.

Belongs to the nuclease type I family. In terms of assembly, monomer. It depends on Zn(2+) as a cofactor. The cofactor is Mn(2+).

The catalysed reaction is Endonucleolytic cleavage to 5'-phosphomononucleotide and 5'-phosphooligonucleotide end-products.. In terms of biological role, endonuclease that can use RNA and single-stranded DNA as substrates. In contradiction with PubMed:23620482, cannot hydrolyze single-stranded DNA and does not cleave mismatches. This chain is Endonuclease 3, found in Arabidopsis thaliana (Mouse-ear cress).